We begin with the raw amino-acid sequence, 125 residues long: Calcitonin gene-related peptide 1 (125 aa).

The signal sequence occupies residues 1-25; the sequence is MVMLKISSFLAVYALVVCQMDSFQA. A propeptide spanning residues 26-77 is cleaved from the precursor; the sequence is APVRPGLESITDRVTLSDYEARRLLNALVKDFIQMTAEELEQASEGNSVTAQ. Cys-81 and Cys-86 are oxidised to a cystine. Phenylalanine amide is present on Phe-116. The propeptide occupies 122-125; that stretch reads SVQI.

The protein belongs to the calcitonin family.

Its subcellular location is the secreted. Functionally, CGRP1/CALCA is a peptide hormone that induces vasodilation mediated by the CALCRL-RAMP1 receptor complex. Dilates a variety of vessels including the coronary, cerebral and systemic vasculature. Its abundance in the CNS also points toward a neurotransmitter or neuromodulator role. It also elevates platelet cAMP. CGRP1 can also bind and activate CALCR-RAMP1 (AMYR1) receptor complex. The chain is Calcitonin gene-related peptide 1 (CALCA) from Gallus gallus (Chicken).